A 123-amino-acid chain; its full sequence is Large ribosomal subunit protein uL18 (123 aa).

The protein belongs to the universal ribosomal protein uL18 family. Part of the 50S ribosomal subunit; part of the 5S rRNA/L5/L18/L25 subcomplex. Contacts the 5S and 23S rRNAs.

Functionally, this is one of the proteins that bind and probably mediate the attachment of the 5S RNA into the large ribosomal subunit, where it forms part of the central protuberance. The sequence is that of Large ribosomal subunit protein uL18 from Bifidobacterium animalis subsp. lactis (strain AD011).